The sequence spans 76 residues: Conotoxin MaIr332 (76 aa).

Residues 1–21 (MKLTCVIVAVLFLTAWTFVTA) form the signal peptide. Positions 22–48 (DDSGNGLENLFSKAHHEMKNPKDSKLN) are excised as a propeptide. Intrachain disulfides connect Cys51–Cys66, Cys58–Cys70, and Cys65–Cys75.

The protein belongs to the conotoxin O1 superfamily. Expressed by the venom duct.

Its subcellular location is the secreted. This is Conotoxin MaIr332 from Conus marmoreus (Marble cone).